We begin with the raw amino-acid sequence, 127 residues long: Large ribosomal subunit protein bL19 (127 aa).

This sequence belongs to the bacterial ribosomal protein bL19 family.

In terms of biological role, this protein is located at the 30S-50S ribosomal subunit interface and may play a role in the structure and function of the aminoacyl-tRNA binding site. This Cupriavidus pinatubonensis (strain JMP 134 / LMG 1197) (Cupriavidus necator (strain JMP 134)) protein is Large ribosomal subunit protein bL19.